A 300-amino-acid polypeptide reads, in one-letter code: Acetylglutamate kinase (300 aa).

Residues 68-69 (GG), arginine 90, and asparagine 195 each bind substrate.

The protein belongs to the acetylglutamate kinase family. ArgB subfamily.

The protein localises to the cytoplasm. It catalyses the reaction N-acetyl-L-glutamate + ATP = N-acetyl-L-glutamyl 5-phosphate + ADP. It functions in the pathway amino-acid biosynthesis; L-arginine biosynthesis; N(2)-acetyl-L-ornithine from L-glutamate: step 2/4. In terms of biological role, catalyzes the ATP-dependent phosphorylation of N-acetyl-L-glutamate. The chain is Acetylglutamate kinase from Azotobacter vinelandii (strain DJ / ATCC BAA-1303).